Reading from the N-terminus, the 505-residue chain is Glutamate--tRNA ligase (505 aa).

Positions 11–21 match the 'HIGH' region motif; that stretch reads PSPTGPLHIGG. Residues 260–264 carry the 'KMSKS' region motif; the sequence is KLSKR. An ATP-binding site is contributed by Lys263.

This sequence belongs to the class-I aminoacyl-tRNA synthetase family. Glutamate--tRNA ligase type 1 subfamily. Monomer.

The protein resides in the cytoplasm. The enzyme catalyses tRNA(Glu) + L-glutamate + ATP = L-glutamyl-tRNA(Glu) + AMP + diphosphate. Its function is as follows. Catalyzes the attachment of glutamate to tRNA(Glu) in a two-step reaction: glutamate is first activated by ATP to form Glu-AMP and then transferred to the acceptor end of tRNA(Glu). This is Glutamate--tRNA ligase from Christiangramia forsetii (strain DSM 17595 / CGMCC 1.15422 / KT0803) (Gramella forsetii).